Here is a 290-residue protein sequence, read N- to C-terminus: 33 kDa chaperonin (290 aa).

Intrachain disulfides connect Cys235/Cys237 and Cys268/Cys271.

Belongs to the HSP33 family. Under oxidizing conditions two disulfide bonds are formed involving the reactive cysteines. Under reducing conditions zinc is bound to the reactive cysteines and the protein is inactive.

Its subcellular location is the cytoplasm. Its function is as follows. Redox regulated molecular chaperone. Protects both thermally unfolding and oxidatively damaged proteins from irreversible aggregation. Plays an important role in the bacterial defense system toward oxidative stress. This is 33 kDa chaperonin from Streptococcus equi subsp. zooepidemicus (strain H70).